The following is a 173-amino-acid chain: MLRASSVLPRGSWHEPAADVVVLDYDARHRRRIRMRGVRGLDFLLDLENALMLRHGDAVKLDDGRLIEIVAAPEHLVEITCPDAAKLAKIAWHLGNRHLPVEFAGTKLRIRYDPVIASMLKNFSARLREIEAPFEPEGGAYAGSGQDHHDHSHGEHTQGEHTHDEAAEPHHHG.

The interval 136 to 173 is disordered; the sequence is PEGGAYAGSGQDHHDHSHGEHTQGEHTHDEAAEPHHHG. The segment covering 146-173 has biased composition (basic and acidic residues); sequence QDHHDHSHGEHTQGEHTHDEAAEPHHHG.

It belongs to the UreE family.

The protein localises to the cytoplasm. In terms of biological role, involved in urease metallocenter assembly. Binds nickel. Probably functions as a nickel donor during metallocenter assembly. This chain is Urease accessory protein UreE, found in Beijerinckia indica subsp. indica (strain ATCC 9039 / DSM 1715 / NCIMB 8712).